The sequence spans 117 residues: Immunoglobulin kappa variable 1-17 (117 aa).

Residues 1 to 22 (MDMRVPAQLLGLLLLWFPGARC) form the signal peptide. Residues 23 to 45 (DIQMTQSPSSLSASVGDRVTITC) are framework-1. Positions 24–117 (IQMTQSPSSL…YYCLQHNSYP (94 aa)) constitute an Ig-like domain. Cys-45 and Cys-110 are joined by a disulfide. A complementarity-determining-1 region spans residues 46-56 (RASQGIRNDLG). The framework-2 stretch occupies residues 57-71 (WYQQKPGKAPKRLIY). Residues 72-78 (AASSLQS) form a complementarity-determining-2 region. Positions 79–110 (GVPSRFSGSGSGTEFTLTISSLQPEDFATYYC) are framework-3. Residues 111–117 (LQHNSYP) form a complementarity-determining-3 region.

Immunoglobulins are composed of two identical heavy chains and two identical light chains; disulfide-linked.

It is found in the secreted. Its subcellular location is the cell membrane. In terms of biological role, v region of the variable domain of immunoglobulin light chains that participates in the antigen recognition. Immunoglobulins, also known as antibodies, are membrane-bound or secreted glycoproteins produced by B lymphocytes. In the recognition phase of humoral immunity, the membrane-bound immunoglobulins serve as receptors which, upon binding of a specific antigen, trigger the clonal expansion and differentiation of B lymphocytes into immunoglobulins-secreting plasma cells. Secreted immunoglobulins mediate the effector phase of humoral immunity, which results in the elimination of bound antigens. The antigen binding site is formed by the variable domain of one heavy chain, together with that of its associated light chain. Thus, each immunoglobulin has two antigen binding sites with remarkable affinity for a particular antigen. The variable domains are assembled by a process called V-(D)-J rearrangement and can then be subjected to somatic hypermutations which, after exposure to antigen and selection, allow affinity maturation for a particular antigen. This chain is Immunoglobulin kappa variable 1-17, found in Homo sapiens (Human).